The sequence spans 211 residues: MSERGLLIVFSGPSGVGKGTVRQEIFSTPDHKFEYSVSMTTRPQRPGEVDGVDYFFRTREEFEELIKTGQMLEYAEYVGNYYGTPLTYVNETLDKGIDVFLEIEVQGALQVKSKVPDGVFVFLTPPDLDELEDRLVGRGTDSQEVIAQRIERAKEEIALMREYDYAVVNDEVALAAERVKRIIETEHFRVERVIGRYDKMIKITKNSFKAK.

In terms of domain architecture, Guanylate kinase-like spans 5–184 (GLLIVFSGPS…AAERVKRIIE (180 aa)). Residue 12–19 (GPSGVGKG) coordinates ATP.

It belongs to the guanylate kinase family.

It localises to the cytoplasm. It carries out the reaction GMP + ATP = GDP + ADP. Functionally, essential for recycling GMP and indirectly, cGMP. This chain is Guanylate kinase, found in Streptococcus pyogenes serotype M1.